The sequence spans 378 residues: Erythronate-4-phosphate dehydrogenase (378 aa).

Substrate contacts are provided by Ser-45 and Thr-66. NAD(+) is bound by residues Asp-146 and Thr-175. Residue Arg-208 is part of the active site. Asp-232 provides a ligand contact to NAD(+). The active site involves Glu-237. His-254 (proton donor) is an active-site residue. Gly-257 serves as a coordination point for NAD(+). Residue Tyr-258 coordinates substrate.

Belongs to the D-isomer specific 2-hydroxyacid dehydrogenase family. PdxB subfamily. Homodimer.

The protein localises to the cytoplasm. It catalyses the reaction 4-phospho-D-erythronate + NAD(+) = (R)-3-hydroxy-2-oxo-4-phosphooxybutanoate + NADH + H(+). The protein operates within cofactor biosynthesis; pyridoxine 5'-phosphate biosynthesis; pyridoxine 5'-phosphate from D-erythrose 4-phosphate: step 2/5. Catalyzes the oxidation of erythronate-4-phosphate to 3-hydroxy-2-oxo-4-phosphonooxybutanoate. The chain is Erythronate-4-phosphate dehydrogenase from Escherichia coli (strain 55989 / EAEC).